The primary structure comprises 454 residues: MPLRARSRKPGAGPAARAPQAGVSEPSFVAKSEDRLFKHLFEDYQRWVRPVEHLNDTIKIKFGLAISQLVDVDEKNQLMTTNVWLKQEWIHVKLRWNPEDYAGITSIRVPSDSIWIPDIVLYDNADGRFEGTSTKTVVKYDGTIAWTPPVNYKSSCTIDVTFFPFDLQNCSMKFGSWTYDGSQVDIILEDYEVDKRDFFDNGEWEIVTATGSKGNRTDGCCWYPFVTYSFIIRRLPLFYTLFLIIPCIGLSFLTVLVFYLPSNEAEKISLCTSVLVSLTVFLLVIEEIIPSSSKVIPLIGEYLVFTMIFVTLSIVITVFAINIHHRSSSTHNAMAPWVRKIFLHKLPKLLCMRSHVDRYFAQKEEKGNMSGSESSRNTLEAALDSIRYITRHVMKENEVREVVEDWKFIAQVLDRMFLWAFLLVSIIGSLVLFIPVIHKWASIIVPVHIGSTNT.

A disordered region spans residues 1–26 (MPLRARSRKPGAGPAARAPQAGVSEP). An N-terminal signal peptide occupies residues 1 to 29 (MPLRARSRKPGAGPAARAPQAGVSEPSFV). Positions 10 to 22 (PGAGPAARAPQAG) are enriched in low complexity. Over 30–240 (AKSEDRLFKH…IIRRLPLFYT (211 aa)) the chain is Extracellular. N-linked (GlcNAc...) asparagine glycans are attached at residues N55, N169, and N215. A disulfide bridge connects residues C156 and C170. An intrachain disulfide couples C220 to C221. 3 helical membrane-spanning segments follow: residues 241-261 (LFLI…FYLP), 270-290 (LCTS…EIIP), and 303-323 (LVFT…AINI). Topologically, residues 324-416 (HHRSSSTHNA…KFIAQVLDRM (93 aa)) are cytoplasmic. Residues 417-437 (FLWAFLLVSIIGSLVLFIPVI) form a helical membrane-spanning segment. Over 438–454 (HKWASIIVPVHIGSTNT) the chain is Extracellular.

It belongs to the ligand-gated ion channel (TC 1.A.9) family. Acetylcholine receptor (TC 1.A.9.1) subfamily. Alpha-5/CHRNA5 sub-subfamily. As to quaternary structure, neuronal AChR that forms heteropentamers composed of two different type of subunits: alpha and non-alpha (beta). CHRNA5/alpha-5 subunit is only able to form functional nAChRs when co-assembled with another alpha subunit, can be combined to CHRNA4/alpha-4 or CHRNA3/alpha-3 and CHRNB4/beta-4 or CHRNB2/beta-2 to give rise to functional receptors. Interacts with LYPD6.

The protein resides in the synaptic cell membrane. It localises to the cell membrane. The enzyme catalyses Ca(2+)(in) = Ca(2+)(out). The catalysed reaction is K(+)(in) = K(+)(out). It carries out the reaction Na(+)(in) = Na(+)(out). Activated by a myriad of ligands such as acetylcholine, cytisine, nicotine, choline and epibatidine. Component of neuronal acetylcholine receptors (nAChRs) that function as pentameric, ligand-gated cation channels with high calcium permeability among other activities. nAChRs are excitatory neurotrasnmitter receptors formed by a collection of nAChR subunits known to mediate synaptic transmission in the nervous system and the neuromuscular junction. Each nAchR subunit confers differential attributes to channel properties, including activation, deactivation and desensitization kinetics, pH sensitivity, cation permeability, and binding to allosteric modulators. Has an accessory rather than functional role and is only able to form functional nAChRs when co-assembled with another beta subunit. Participates in pentameric assemblies along with CHRNA3, CHRNA4, CHRNB2 and CHRNB4. Increases receptor sensitivity to acetylcholine and nicotine when associated with CHRNA4 and CHRNB2. Plays a role in nicotine addiction. The polypeptide is Neuronal acetylcholine receptor subunit alpha-5 (CHRNA5) (Gallus gallus (Chicken)).